Reading from the N-terminus, the 432-residue chain is MSELKDCPLQFHDFKSVDHVKLCPRYTAVLSRSEDDGIGIEELDTLQLELETLLSSASRRLRVLEAETQILTDWQDKKGDRRFLKLGKEHELGTPIKHSKPKKQKLDGKGSHASGPGPGRPKSRNMQQKMQEYEFTDDPVDVPRIPKNDAPNRFWASVEPYCADITNDEIKVLEDLLKTPEDEADYYKIPPLGKHYSQRWAQEDLLEEQKDGARTALSGDKKKGILGPLAELDSKDVDSLLKKSESQHDQPEDGCPFGHLTQRLLQALVEENIISPVEDSPIPEISGKESGTDGASTSPRSQNKPFSAPHTKSLEVRIKEELIAQGLLESDDRPAEDSEDEVLAELRKRQAELKALSAHNRAKKQELLRLAKEEMNRQELRQRVRMADNEVMDAFRKIMAARQKKRTPTKKEKDQAWKALKERESILKLLDG.

Residues 40-69 (IEELDTLQLELETLLSSASRRLRVLEAETQ) are a coiled coil. 2 disordered regions span residues 88-127 (KEHELGTPIKHSKPKKQKLDGKGSHASGPGPGRPKSRNMQ) and 275-313 (SPVEDSPIPEISGKESGTDGASTSPRSQNKPFSAPHTKS). The segment covering 293-305 (DGASTSPRSQNKP) has biased composition (polar residues). The stretch at 367 to 407 (LLRLAKEEMNRQELRQRVRMADNEVMDAFRKIMAARQKKRT) forms a coiled coil.

The protein belongs to the NGG1 family.

Its subcellular location is the nucleus. In terms of biological role, functions as a component of the PCAF complex. The PCAF complex is capable of efficiently acetylating histones in a nucleosomal context. This Xenopus tropicalis (Western clawed frog) protein is Transcriptional adapter 3 (tada3).